Consider the following 181-residue polypeptide: Nucleoside diphosphate kinase, mitochondrial (181 aa).

A compositionally biased stretch (basic residues) spans 1–10 (MFRGGTHRLR). The tract at residues 1 to 22 (MFRGGTHRLRGQPGLSLPHGPR) is disordered. The N-terminal 24 residues, 1-24 (MFRGGTHRLRGQPGLSLPHGPRCY), are a transit peptide targeting the mitochondrion. ATP is bound by residues Lys-40, Phe-88, Arg-116, Thr-122, Arg-133, and Asn-143. Residue His-146 is the Pros-phosphohistidine intermediate of the active site.

This sequence belongs to the NDK family. Mg(2+) serves as cofactor. In terms of tissue distribution, highest levels in the liver and kidney with lower levels in the heart, brain and breast muscle.

The protein localises to the mitochondrion intermembrane space. Its subcellular location is the mitochondrion matrix. The catalysed reaction is a 2'-deoxyribonucleoside 5'-diphosphate + ATP = a 2'-deoxyribonucleoside 5'-triphosphate + ADP. It catalyses the reaction a ribonucleoside 5'-diphosphate + ATP = a ribonucleoside 5'-triphosphate + ADP. Feedback inhibition by ADP. Major role in the synthesis of nucleoside triphosphates other than ATP. The ATP gamma phosphate is transferred to the NDP beta phosphate via a ping-pong mechanism, using a phosphorylated active-site intermediate. Through the catalyzed exchange of gamma-phosphate between di- and triphosphonucleosides participates in regulation of intracellular nucleotide homeostasis. Binds to anionic phospholipids, predominantly to cardiolipin; the binding inhibits its phosphotransfer activity. Acts as a mitochondria-specific NDK coupled to respiration. Promotes the redistribution of cardiolipin between the mitochondrial inner membrane and outer membrane which is implicated in pro-apoptotic signaling. The protein is Nucleoside diphosphate kinase, mitochondrial (NME4) of Columba livia (Rock dove).